The sequence spans 341 residues: Dehydration-responsive element-binding protein 2C (341 aa).

A Nuclear localization signal motif is present at residues 8–48; that stretch reads RKRKSRGTRDVAEILRQWREYNEQIEAESCIDGGGPKSIRK. The segment at 36–63 is disordered; that stretch reads SCIDGGGPKSIRKPPPKGSRKGCMKGKG. The segment covering 45–59 has biased composition (basic residues); that stretch reads SIRKPPPKGSRKGCM. Residues 71–128 constitute a DNA-binding region (AP2/ERF); it reads DYRGVRQRRWGKWVAEIREPDGGARLWLGTFSSSYEAALAYDEAAKAIYGQSARLNLP.

It belongs to the AP2/ERF transcription factor family. ERF subfamily.

It is found in the nucleus. Functionally, transcriptional activator that binds specifically to the DNA sequence 5'-[AG]CCGAC-3'. Binding to the C-repeat/DRE element mediates high salinity- and abscisic acid-inducible transcription. The chain is Dehydration-responsive element-binding protein 2C (DREB2C) from Arabidopsis thaliana (Mouse-ear cress).